Here is a 129-residue protein sequence, read N- to C-terminus: Procyclic form-specific polypeptide A-beta (129 aa).

Positions 1 to 27 are cleaved as a signal peptide; sequence MAPRSLYLLAVLLFSANLFAGVGFAAA. The interval 27 to 111 is disordered; sequence AAEGPEDKGL…PEPEPGAATL (85 aa). A compositionally biased stretch (acidic residues) spans 53 to 104; the sequence is DDTNGTDPDPEPEPEPEPEPEPEPEPEPEPEPEPEPEPEPEPEPEPEPEPEP. Residue Asn-56 is glycosylated (N-linked (GlcNAc...) asparagine). 24 consecutive repeat copies span residues 59 to 60, 61 to 62, 63 to 64, 65 to 66, 67 to 68, 69 to 70, 71 to 72, 73 to 74, 75 to 76, 77 to 78, 79 to 80, 81 to 82, 83 to 84, 85 to 86, 87 to 88, 89 to 90, 91 to 92, 93 to 94, 95 to 96, 97 to 98, 99 to 100, 101 to 102, 103 to 104, and 105 to 106. Residues 59–106 form a 24 X 2 AA tandem repeats of [DE]-P region; it reads DPDPEPEPEPEPEPEPEPEPEPEPEPEPEPEPEPEPEPEPEPEPEPEP. The GPI-anchor amidated glycine moiety is linked to residue Gly-107. Residues 108–129 constitute a propeptide that is removed on maturation; it reads AATLKSVALPFAIAAVGLVAAF.

The protein localises to the cell membrane. Major surface antigen of procyclic forms. In Trypanosoma brucei brucei, this protein is Procyclic form-specific polypeptide A-beta (PARPA-BETA).